Reading from the N-terminus, the 150-residue chain is Large ribosomal subunit protein bL9 (150 aa).

It belongs to the bacterial ribosomal protein bL9 family.

In terms of biological role, binds to the 23S rRNA. The chain is Large ribosomal subunit protein bL9 from Neisseria gonorrhoeae.